We begin with the raw amino-acid sequence, 210 residues long: Glutathione S-transferase P 1 (210 aa).

The region spanning 1 to 80 (PEYTIIYFNA…LLARNHDLYG (80 aa)) is the GST N-terminal domain. Glutathione contacts are provided by residues Y7, R13, W38, K44, 51–52 (QL), and 64–65 (QS). The region spanning 82–203 (NPREASLIDM…SSDAHKKRPI (122 aa)) is the GST C-terminal domain.

Belongs to the GST superfamily. Pi family. In terms of assembly, homodimer.

Its subcellular location is the cytoplasm. It localises to the mitochondrion. The protein localises to the nucleus. It catalyses the reaction RX + glutathione = an S-substituted glutathione + a halide anion + H(+). In terms of biological role, conjugation of reduced glutathione to a wide number of exogenous and endogenous hydrophobic electrophiles. The sequence is that of Glutathione S-transferase P 1 from Bufo bufo (European toad).